The sequence spans 290 residues: ATP synthase gamma chain (290 aa).

Belongs to the ATPase gamma chain family. In terms of assembly, F-type ATPases have 2 components, CF(1) - the catalytic core - and CF(0) - the membrane proton channel. CF(1) has five subunits: alpha(3), beta(3), gamma(1), delta(1), epsilon(1). CF(0) has three main subunits: a, b and c.

It localises to the cell inner membrane. In terms of biological role, produces ATP from ADP in the presence of a proton gradient across the membrane. The gamma chain is believed to be important in regulating ATPase activity and the flow of protons through the CF(0) complex. The sequence is that of ATP synthase gamma chain from Gemmatimonas aurantiaca (strain DSM 14586 / JCM 11422 / NBRC 100505 / T-27).